Here is a 408-residue protein sequence, read N- to C-terminus: G patch domain-containing protein 4 (408 aa).

M1 is subject to N-acetylmethionine. T4 bears the Phosphothreonine mark. The 47-residue stretch at 11–57 (GMKFAEEQLLKHGWTQGKGLGRKENGITQALRVTLKQDTYGVGHDPA) folds into the G-patch domain. Residue K46 forms a Glycyl lysine isopeptide (Lys-Gly) (interchain with G-Cter in SUMO2) linkage. T116 bears the Phosphothreonine mark. Disordered stretches follow at residues 116-141 (TSSGEKPDKDWESCSDDDSQEPKPPN) and 187-408 (GQDP…KKRD). A phosphoserine mark is found at S128 and S130. Basic and acidic residues-rich tracts occupy residues 222–236 (RSAEKYSEHTDESIR), 245–257 (HQEERVTDEREGT), and 274–283 (LKNREHVDRS). A compositionally biased stretch (acidic residues) spans 340–354 (EEDLNTEDEEVEEAL). Positions 358–372 (GTREAESRSCSDQKR) are enriched in basic and acidic residues. Basic residues predominate over residues 398 to 408 (KAKKKKQKKRD).

This chain is G patch domain-containing protein 4 (GPATCH4), found in Bos taurus (Bovine).